Here is a 351-residue protein sequence, read N- to C-terminus: Replication-associated protein (351 aa).

In terms of domain architecture, CRESS-DNA virus Rep endonuclease spans Gln8–Phe116. An RCR-1 motif is present at residues Phe15–Tyr18. A divalent metal cation is bound by residues Glu49, His57, and His59. Residues His57–His59 carry the RCR-2 motif. Tyr103 acts as the For DNA cleavage activity in catalysis. The short motif at Tyr103 to Lys106 is the RCR-3 element. Asp107 is a binding site for a divalent metal cation. Residues Lys143–Leu153 are binding to RBR1. An oligomerization region spans residues Arg156–Pro176. An ATP-binding site is contributed by Gly220–Thr227.

The protein belongs to the geminiviridae Rep protein family. In terms of assembly, homooligomer. Interacts with the replication enhancer protein (REn). Interacts with host retinoblastoma-related protein 1 (RBR1), and may thereby induce the transcription of host replicative enzymes even if the cell is not dividing anymore. Interacts with host PCNA. Interacts with host SCE1 protein. It depends on Mg(2+) as a cofactor. The cofactor is Mn(2+).

The protein resides in the host nucleus. Functionally, essential for the replication of viral ssDNA. The closed circular ssDNA genome is first converted to a superhelical dsDNA. Rep binds a specific region at the genome origin of replication. It introduces an endonucleolytic nick within the conserved sequence 5'-TAATATTAC-3' in the intergenic region of the genome present in all geminiviruses, thereby initiating the rolling circle replication (RCR). Following cleavage, binds covalently to the 5'-phosphate of DNA as a tyrosyl ester. The cleavage gives rise to a free 3'-OH that serves as a primer for the cellular DNA polymerase. The polymerase synthesizes the (+) strand DNA by rolling circle mechanism. After one round of replication, a Rep-catalyzed nucleotidyl transfer reaction releases a circular single-stranded virus genome, thereby terminating the replication. Displays origin-specific DNA cleavage, nucleotidyl transferase, ATPase and helicase activities. This Manihot esculenta (Cassava) protein is Replication-associated protein.